The chain runs to 376 residues: Lipoprotein p33 (376 aa).

Residues 1–30 (MKIKKIKLLKALALTGAFGIVATVPVIVSS) form the signal peptide. Residue C31 is the site of N-palmitoyl cysteine attachment. C31 carries S-diacylglycerol cysteine lipidation. The segment at 33–59 (STDNNGGTGDNNTGGGGSGTDQQQGTT) is disordered. Residues 38–51 (GGTGDNNTGGGGSG) are compositionally biased toward gly residues.

Belongs to the p35 lipoprotein family.

It is found in the cell membrane. The polypeptide is Lipoprotein p33 (Malacoplasma penetrans (strain HF-2) (Mycoplasma penetrans)).